A 383-amino-acid polypeptide reads, in one-letter code: 3-dehydroquinate synthase (383 aa).

Residues 81–86, 115–119, 139–140, lysine 152, and lysine 161 contribute to the NAD(+) site; these read EGEVSK, GVVGD, and TS. Positions 194, 256, and 274 each coordinate Zn(2+).

This sequence belongs to the sugar phosphate cyclases superfamily. Dehydroquinate synthase family. The cofactor is Co(2+). Zn(2+) serves as cofactor. It depends on NAD(+) as a cofactor.

It localises to the cytoplasm. The enzyme catalyses 7-phospho-2-dehydro-3-deoxy-D-arabino-heptonate = 3-dehydroquinate + phosphate. It functions in the pathway metabolic intermediate biosynthesis; chorismate biosynthesis; chorismate from D-erythrose 4-phosphate and phosphoenolpyruvate: step 2/7. Functionally, catalyzes the conversion of 3-deoxy-D-arabino-heptulosonate 7-phosphate (DAHP) to dehydroquinate (DHQ). The polypeptide is 3-dehydroquinate synthase (Nitrobacter hamburgensis (strain DSM 10229 / NCIMB 13809 / X14)).